The following is a 345-amino-acid chain: Anthranilate phosphoribosyltransferase (345 aa).

5-phospho-alpha-D-ribose 1-diphosphate is bound by residues glycine 84, 87 to 88 (GD), threonine 92, 94 to 97 (NIST), 112 to 120 (KHGGRSVSS), and serine 124. An anthranilate-binding site is contributed by glycine 84. Serine 96 provides a ligand contact to Mg(2+). Arginine 170 is an anthranilate binding site. 2 residues coordinate Mg(2+): aspartate 229 and glutamate 230.

The protein belongs to the anthranilate phosphoribosyltransferase family. As to quaternary structure, homodimer. Mg(2+) is required as a cofactor.

The catalysed reaction is N-(5-phospho-beta-D-ribosyl)anthranilate + diphosphate = 5-phospho-alpha-D-ribose 1-diphosphate + anthranilate. Its pathway is amino-acid biosynthesis; L-tryptophan biosynthesis; L-tryptophan from chorismate: step 2/5. Its function is as follows. Catalyzes the transfer of the phosphoribosyl group of 5-phosphorylribose-1-pyrophosphate (PRPP) to anthranilate to yield N-(5'-phosphoribosyl)-anthranilate (PRA). The protein is Anthranilate phosphoribosyltransferase of Herminiimonas arsenicoxydans.